Reading from the N-terminus, the 552-residue chain is Hydroxylamine reductase (552 aa).

[4Fe-4S] cluster-binding residues include C3, C6, C15, and C21. Hybrid [4Fe-2O-2S] cluster contacts are provided by H247, E271, C315, C407, C435, C460, E495, and K497. C407 carries the cysteine persulfide modification.

The protein belongs to the HCP family. [4Fe-4S] cluster is required as a cofactor. The cofactor is hybrid [4Fe-2O-2S] cluster.

The protein localises to the cytoplasm. It catalyses the reaction A + NH4(+) + H2O = hydroxylamine + AH2 + H(+). In terms of biological role, catalyzes the reduction of hydroxylamine to form NH(3) and H(2)O. This is Hydroxylamine reductase from Thermosipho melanesiensis (strain DSM 12029 / CIP 104789 / BI429).